Here is a 99-residue protein sequence, read N- to C-terminus: UPF0213 protein RBAM_000440 (99 aa).

A GIY-YIG domain is found at 4–79 (NSHFFYVLLC…KQLTRKKKEQ (76 aa)).

This sequence belongs to the UPF0213 family.

In Bacillus velezensis (strain DSM 23117 / BGSC 10A6 / LMG 26770 / FZB42) (Bacillus amyloliquefaciens subsp. plantarum), this protein is UPF0213 protein RBAM_000440.